A 415-amino-acid polypeptide reads, in one-letter code: S-inosyl-L-homocysteine hydrolase (415 aa).

2 residues coordinate substrate: D123 and E148. 149 to 151 (TTT) serves as a coordination point for NAD(+). Residues K178 and D182 each contribute to the substrate site. NAD(+)-binding positions include N183, 212 to 217 (GYGWCG), E235, 291 to 293 (AGH), and N337.

It belongs to the adenosylhomocysteinase family. It depends on NAD(+) as a cofactor.

Its subcellular location is the cytoplasm. It carries out the reaction S-inosyl-L-homocysteine + H2O = L-homocysteine + inosine. It participates in amino-acid biosynthesis; S-adenosyl-L-methionine biosynthesis. Catalyzes the hydrolysis of S-inosyl-L-homocysteine (SIH) to L-homocysteine (Hcy) and inosine. Likely functions in a S-adenosyl-L-methionine (SAM) recycling pathway from S-adenosyl-L-homocysteine (SAH) produced from SAM-dependent methylation reactions. Can also catalyze the reverse reaction in vitro, i.e. the synthesis of SIH from Hcy and inosine. The polypeptide is S-inosyl-L-homocysteine hydrolase (Methanococcus maripaludis (strain DSM 14266 / JCM 13030 / NBRC 101832 / S2 / LL)).